Here is a 371-residue protein sequence, read N- to C-terminus: 4-hydroxy-3-methylbut-2-en-1-yl diphosphate synthase (flavodoxin) (371 aa).

[4Fe-4S] cluster contacts are provided by Cys270, Cys273, Cys305, and Glu312.

It belongs to the IspG family. It depends on [4Fe-4S] cluster as a cofactor.

The enzyme catalyses (2E)-4-hydroxy-3-methylbut-2-enyl diphosphate + oxidized [flavodoxin] + H2O + 2 H(+) = 2-C-methyl-D-erythritol 2,4-cyclic diphosphate + reduced [flavodoxin]. It participates in isoprenoid biosynthesis; isopentenyl diphosphate biosynthesis via DXP pathway; isopentenyl diphosphate from 1-deoxy-D-xylulose 5-phosphate: step 5/6. Functionally, converts 2C-methyl-D-erythritol 2,4-cyclodiphosphate (ME-2,4cPP) into 1-hydroxy-2-methyl-2-(E)-butenyl 4-diphosphate. The polypeptide is 4-hydroxy-3-methylbut-2-en-1-yl diphosphate synthase (flavodoxin) (Shewanella sediminis (strain HAW-EB3)).